A 298-amino-acid polypeptide reads, in one-letter code: tRNA pseudouridine synthase-like 1 (298 aa).

D60 serves as the catalytic Nucleophile. Residue Y124 participates in substrate binding.

It belongs to the tRNA pseudouridine synthase TruA family.

The enzyme catalyses a uridine in tRNA = a pseudouridine in tRNA. The chain is tRNA pseudouridine synthase-like 1 (pusl1) from Xenopus laevis (African clawed frog).